Here is a 510-residue protein sequence, read N- to C-terminus: Pantetheinase (510 aa).

An N-terminal signal peptide occupies residues 1–22 (MIMSQLLNYVAVLFFCVSRASS). Residues 31–307 (YEHAVILPNA…GKLLLAQLDS (277 aa)) form the CN hydrolase domain. N-linked (GlcNAc...) asparagine glycosylation is present at Asn-39. Glu-80 functions as the Proton acceptor in the catalytic mechanism. N-linked (GlcNAc...) asparagine glycans are attached at residues Asn-87 and Asn-147. Catalysis depends on Lys-179, which acts as the Proton donor. An N-linked (GlcNAc...) asparagine glycan is attached at Asn-201. Cys-212 functions as the Nucleophile in the catalytic mechanism. N-linked (GlcNAc...) asparagine glycans are attached at residues Asn-316 and Asn-354. Asp-492 is lipidated: GPI-anchor amidated aspartate. A propeptide spans 493–510 (LTTQALRLNPKTDAWKSK) (removed in mature form). A glycan (O-linked (GalNAc...) threonine) is linked at Thr-504.

It belongs to the carbon-nitrogen hydrolase superfamily. BTD/VNN family. As to quaternary structure, monomer.

It is found in the cell membrane. The catalysed reaction is (R)-pantetheine + H2O = cysteamine + (R)-pantothenate. In terms of biological role, amidohydrolase that hydrolyzes specifically one of the carboamide linkages in D-pantetheine thus recycling pantothenic acid (vitamin B5) and releasing cysteamine. This chain is Pantetheinase (VNN1), found in Bos taurus (Bovine).